A 411-amino-acid chain; its full sequence is Tyrosine--tRNA ligase (411 aa).

Tyr34 provides a ligand contact to L-tyrosine. The 'HIGH' region motif lies at 39 to 48 (CTATSLHIGS). Residues Tyr171 and Gln175 each contribute to the L-tyrosine site. Positions 231–235 (KMGKT) match the 'KMSKS' region motif. Lys234 is a binding site for ATP. Residues 345–411 (ISAYELFYEA…GKKRHILVRV (67 aa)) form the S4 RNA-binding domain.

It belongs to the class-I aminoacyl-tRNA synthetase family. TyrS type 1 subfamily. In terms of assembly, homodimer.

The protein resides in the cytoplasm. The enzyme catalyses tRNA(Tyr) + L-tyrosine + ATP = L-tyrosyl-tRNA(Tyr) + AMP + diphosphate + H(+). In terms of biological role, catalyzes the attachment of tyrosine to tRNA(Tyr) in a two-step reaction: tyrosine is first activated by ATP to form Tyr-AMP and then transferred to the acceptor end of tRNA(Tyr). The polypeptide is Tyrosine--tRNA ligase (Rickettsia rickettsii (strain Sheila Smith)).